The primary structure comprises 245 residues: tRNA pseudouridine synthase A (245 aa).

Residue Asp-52 is the Nucleophile of the active site. Tyr-111 contacts substrate.

The protein belongs to the tRNA pseudouridine synthase TruA family. As to quaternary structure, homodimer.

The catalysed reaction is uridine(38/39/40) in tRNA = pseudouridine(38/39/40) in tRNA. Formation of pseudouridine at positions 38, 39 and 40 in the anticodon stem and loop of transfer RNAs. In Rhodospirillum centenum (strain ATCC 51521 / SW), this protein is tRNA pseudouridine synthase A.